We begin with the raw amino-acid sequence, 498 residues long: Glycerol kinase (498 aa).

Thr12 lines the ADP pocket. ATP is bound by residues Thr12, Thr13, and Ser14. Thr12 contributes to the sn-glycerol 3-phosphate binding site. ADP is bound at residue Arg16. 4 residues coordinate sn-glycerol 3-phosphate: Arg82, Glu83, Tyr134, and Asp243. Glycerol contacts are provided by Arg82, Glu83, Tyr134, Asp243, and Gln244. 2 residues coordinate ADP: Thr265 and Gly308. Residues Thr265, Gly308, Gln312, and Gly409 each contribute to the ATP site. Positions 409 and 413 each coordinate ADP.

This sequence belongs to the FGGY kinase family. Homotetramer and homodimer (in equilibrium).

It catalyses the reaction glycerol + ATP = sn-glycerol 3-phosphate + ADP + H(+). The protein operates within polyol metabolism; glycerol degradation via glycerol kinase pathway; sn-glycerol 3-phosphate from glycerol: step 1/1. Activated by phosphorylation and inhibited by fructose 1,6-bisphosphate (FBP). In terms of biological role, key enzyme in the regulation of glycerol uptake and metabolism. Catalyzes the phosphorylation of glycerol to yield sn-glycerol 3-phosphate. This chain is Glycerol kinase, found in Clostridium botulinum (strain 657 / Type Ba4).